The following is a 31-amino-acid chain: Ranatuerin-2Ca (31 aa).

Cysteine 24 and cysteine 29 are oxidised to a cystine.

In terms of tissue distribution, expressed by the skin glands.

Its subcellular location is the secreted. Functionally, antibacterial activity against Gram-positive bacterium S.aureus and Gram-negative bacterium E.coli. Has activity against C.albicans. The polypeptide is Ranatuerin-2Ca (Lithobates clamitans (Green frog)).